The chain runs to 566 residues: Zinc finger protein 704 (566 aa).

3 disordered regions span residues 1 to 148 (MQAR…ARGA), 166 to 203 (DFRR…LDQE), and 253 to 324 (PLVR…DEAD). The segment covering 12-31 (LGSRRGGAAPAPAPEAAALG) has biased composition (low complexity). The segment covering 32-55 (LPPPGPSPAAAPGSWRPPLPPPRG) has biased composition (pro residues). A compositionally biased stretch (low complexity) spans 56 to 72 (TGPSRAAAASSPVLLLL). Basic and acidic residues predominate over residues 91 to 100 (RVTEKPRGVA). Positions 101 to 128 (EEEDDDEEEDEEVVVEVVDGDEDDEDAE) are enriched in acidic residues. Positions 186–203 (EDVRTADTKKTSRVLDQE) are enriched in basic and acidic residues. The span at 267–290 (SGSWKEGAPSSSSSSGYWSWSAPS) shows a compositional bias: low complexity. The segment at 346 to 371 (FKCLWKSCGKVLNTAAGIQKHIRAVH) adopts a C2H2-type zinc-finger fold. A phosphoserine mark is found at serine 378 and serine 381. 2 disordered regions span residues 409–436 (VSPS…CAKT) and 497–535 (PVSP…PRGE). The sufficient for binding to RE2 sequence motifs stretch occupies residues 471 to 566 (GSAKFTPNGS…WKKACQRFID (96 aa)). The short motif at 537–541 (KKCRK) is the CR1 element. The short motif at 555 to 559 (CRWKK) is the CR2 element.

It localises to the nucleus. Functionally, transcription factor which binds to RE2 sequence elements in the MYOD1 enhancer. The chain is Zinc finger protein 704 from Mus musculus (Mouse).